Here is a 636-residue protein sequence, read N- to C-terminus: Threonine--tRNA ligase (636 aa).

The TGS domain occupies 1 to 63 (MINITTSFPN…SKDGSVDPVT (63 aa)). The interval 244–535 (DHRKIAKDLG…LIEHYAGNIP (292 aa)) is catalytic. Residues Cys335, His386, and His512 each contribute to the Zn(2+) site.

This sequence belongs to the class-II aminoacyl-tRNA synthetase family. As to quaternary structure, homodimer. The cofactor is Zn(2+).

It is found in the cytoplasm. The enzyme catalyses tRNA(Thr) + L-threonine + ATP = L-threonyl-tRNA(Thr) + AMP + diphosphate + H(+). In terms of biological role, catalyzes the attachment of threonine to tRNA(Thr) in a two-step reaction: L-threonine is first activated by ATP to form Thr-AMP and then transferred to the acceptor end of tRNA(Thr). Also edits incorrectly charged L-seryl-tRNA(Thr). This is Threonine--tRNA ligase from Anaplasma marginale (strain Florida).